A 305-amino-acid chain; its full sequence is MQIDKVKVAILGSGNIGTDLMYKLLKQPGRMELALVAGIDPASEGLARARQIGIPTATDGIESILADPDIRIVFDATSAKAHVRHARLLRDHGRIAIDLTPAARGPYVVPPVNLGEHLEAHNVNLITCGGQATIPLVYAVSRVTAVRYAEMVSTVASRSAGPGTRQNIDEFTFTTARGLEAIGGAREAKAIIILNPAHPPILMRNTIYVVPEGDFDEETVRQSVAQMVADVQQYVPGYRLKSLPVIEQRSTPWGERPVIIMLLEVEGAGDFLPTYAGNLDIMTAAARRVGELFAAHLLSKLEVTV.

NAD(+) is bound at residue S13–I16. C128 serves as the catalytic Acyl-thioester intermediate. Residues S159 to N167 and N278 contribute to the NAD(+) site.

Belongs to the acetaldehyde dehydrogenase family.

The catalysed reaction is acetaldehyde + NAD(+) + CoA = acetyl-CoA + NADH + H(+). This Chloroflexus aurantiacus (strain ATCC 29366 / DSM 635 / J-10-fl) protein is Acetaldehyde dehydrogenase.